The following is a 57-amino-acid chain: Large ribosomal subunit protein bL32 (57 aa).

The protein belongs to the bacterial ribosomal protein bL32 family.

The chain is Large ribosomal subunit protein bL32 from Staphylococcus epidermidis (strain ATCC 35984 / DSM 28319 / BCRC 17069 / CCUG 31568 / BM 3577 / RP62A).